The sequence spans 553 residues: Membrane protein insertase YidC (553 aa).

5 consecutive transmembrane segments (helical) span residues 7–24 (VLWV…DNWQ), 365–385 (WGWA…PLSA), 435–455 (LPVV…LASV), 474–494 (PFFI…SLNP), and 509–529 (PIAF…YYVV).

Belongs to the OXA1/ALB3/YidC family. Type 1 subfamily. As to quaternary structure, interacts with the Sec translocase complex via SecD. Specifically interacts with transmembrane segments of nascent integral membrane proteins during membrane integration.

It localises to the cell inner membrane. In terms of biological role, required for the insertion and/or proper folding and/or complex formation of integral membrane proteins into the membrane. Involved in integration of membrane proteins that insert both dependently and independently of the Sec translocase complex, as well as at least some lipoproteins. Aids folding of multispanning membrane proteins. The chain is Membrane protein insertase YidC from Burkholderia orbicola (strain MC0-3).